Consider the following 294-residue polypeptide: Cytidine deaminase (294 aa).

CMP/dCMP-type deaminase domains lie at aspartate 48–lysine 168 and valine 186–glycine 294. Asparagine 89–glutamate 91 provides a ligand contact to substrate. Histidine 102 lines the Zn(2+) pocket. Catalysis depends on glutamate 104, which acts as the Proton donor. Zn(2+) contacts are provided by cysteine 129 and cysteine 132.

This sequence belongs to the cytidine and deoxycytidylate deaminase family. In terms of assembly, homodimer. It depends on Zn(2+) as a cofactor.

The catalysed reaction is cytidine + H2O + H(+) = uridine + NH4(+). It catalyses the reaction 2'-deoxycytidine + H2O + H(+) = 2'-deoxyuridine + NH4(+). Functionally, this enzyme scavenges exogenous and endogenous cytidine and 2'-deoxycytidine for UMP synthesis. The protein is Cytidine deaminase of Klebsiella pneumoniae (strain 342).